The following is a 634-amino-acid chain: Chaperone protein HtpG (634 aa).

The tract at residues 1–342 is a; substrate-binding; sequence MSVETQKETL…SNDLSLNVSR (342 aa). Residues 343–559 form a b region; that stretch reads EILQKDPIID…EQDLGLQMRQ (217 aa). The interval 560-634 is c; sequence ILEASGQKVP…LNKLLVELSV (75 aa).

Belongs to the heat shock protein 90 family. In terms of assembly, homodimer.

It is found in the cytoplasm. Molecular chaperone. Has ATPase activity. This Pseudomonas fluorescens (strain ATCC BAA-477 / NRRL B-23932 / Pf-5) protein is Chaperone protein HtpG.